Reading from the N-terminus, the 177-residue chain is tRNA (cytidine(56)-2'-O)-methyltransferase (177 aa).

Residues Leu-84 and 109-113 each bind S-adenosyl-L-methionine; that span reads GAEKV.

This sequence belongs to the aTrm56 family. As to quaternary structure, homodimer.

The protein resides in the cytoplasm. The catalysed reaction is cytidine(56) in tRNA + S-adenosyl-L-methionine = 2'-O-methylcytidine(56) in tRNA + S-adenosyl-L-homocysteine + H(+). Functionally, specifically catalyzes the AdoMet-dependent 2'-O-ribose methylation of cytidine at position 56 in tRNAs. This chain is tRNA (cytidine(56)-2'-O)-methyltransferase, found in Methanosarcina acetivorans (strain ATCC 35395 / DSM 2834 / JCM 12185 / C2A).